The chain runs to 121 residues: Large ribosomal subunit protein bL12 (121 aa).

The protein belongs to the bacterial ribosomal protein bL12 family. As to quaternary structure, homodimer. Part of the ribosomal stalk of the 50S ribosomal subunit. Forms a multimeric L10(L12)X complex, where L10 forms an elongated spine to which 2 to 4 L12 dimers bind in a sequential fashion. Binds GTP-bound translation factors.

In terms of biological role, forms part of the ribosomal stalk which helps the ribosome interact with GTP-bound translation factors. Is thus essential for accurate translation. This chain is Large ribosomal subunit protein bL12, found in Psychromonas ingrahamii (strain DSM 17664 / CCUG 51855 / 37).